Reading from the N-terminus, the 255-residue chain is tRNA (guanine-N(1)-)-methyltransferase (255 aa).

S-adenosyl-L-methionine-binding positions include Gly-113 and 133-138; that span reads IGDYVL.

The protein belongs to the RNA methyltransferase TrmD family. As to quaternary structure, homodimer.

The protein resides in the cytoplasm. It catalyses the reaction guanosine(37) in tRNA + S-adenosyl-L-methionine = N(1)-methylguanosine(37) in tRNA + S-adenosyl-L-homocysteine + H(+). Functionally, specifically methylates guanosine-37 in various tRNAs. This Escherichia coli O127:H6 (strain E2348/69 / EPEC) protein is tRNA (guanine-N(1)-)-methyltransferase.